Reading from the N-terminus, the 267-residue chain is Pro-opiomelanocortin (267 aa).

The signal sequence occupies residues 1–26; sequence MPRLCGSRSGALLLTLLLQASMGVRG. Position 87 is a phenylalanine amide (Phe-87). Disordered regions lie at residues 88-156 and 215-242; these read GRRN…RPVK and KKDE…GFMT. Residue Asn-91 is glycosylated (N-linked (GlcNAc...) asparagine). Over residues 94–105 the composition is skewed to gly residues; it reads SSGGGGGGGGAG. The propeptide occupies 109-133; it reads EEEEVAAGEGPGPRGDGVAPGPRQD. The span at 131–143 shows a compositional bias: basic and acidic residues; the sequence is RQDKRSYSMEHFR. Ser-136 is subject to N-acetylserine; in Corticotropin. Val-148 is subject to Valine amide. Positions 215–237 are enriched in basic and acidic residues; that stretch reads KKDEGPYKMEHFRWGSPPKDKRY.

It belongs to the POMC family. Post-translationally, specific enzymatic cleavages at paired basic residues yield the different active peptides. ACTH and MSH are produced by the pituitary gland.

Its subcellular location is the secreted. Stimulates the adrenal glands to release cortisol. Functionally, anorexigenic peptide. Increases the pigmentation of skin by increasing melanin production in melanocytes. In terms of biological role, increases the pigmentation of skin by increasing melanin production in melanocytes. Its function is as follows. Endogenous orexigenic opiate. Endogenous opiate. This is Pro-opiomelanocortin (POMC) from Sus scrofa (Pig).